Reading from the N-terminus, the 282-residue chain is Shikimate dehydrogenase (NADP(+)) (282 aa).

Residues 19–21 (TQS) and Thr-66 each bind shikimate. Lys-70 functions as the Proton acceptor in the catalytic mechanism. The shikimate site is built by Asn-91 and Asp-107. Residues 132-136 (GAGGA), 155-160 (NRTITR), Ile-224, and Gly-246 each bind NADP(+).

This sequence belongs to the shikimate dehydrogenase family. Homodimer.

The enzyme catalyses shikimate + NADP(+) = 3-dehydroshikimate + NADPH + H(+). It participates in metabolic intermediate biosynthesis; chorismate biosynthesis; chorismate from D-erythrose 4-phosphate and phosphoenolpyruvate: step 4/7. In terms of biological role, involved in the biosynthesis of the chorismate, which leads to the biosynthesis of aromatic amino acids. Catalyzes the reversible NADPH linked reduction of 3-dehydroshikimate (DHSA) to yield shikimate (SA). The polypeptide is Shikimate dehydrogenase (NADP(+)) (Buchnera aphidicola subsp. Baizongia pistaciae (strain Bp)).